The chain runs to 1375 residues: MAQATPYSYTERKRIRKSFGKRENVLGVPYLLTMQKDSYVAFLQKDVPPQKRKPEGLQAAFLSAFPIVSHNGFVEMKYIEFNMAKPAFDTRECQQRGLTYAAAVRAKLQMIIYDRETSTSQSKVVKEIKEQEVYMGEVPLMTDYGSFIVNGTERVIVSQLHRSPGVFFEHDKGKTHSSGKLLFSARIIPYRGSWLDFEFDPKDILYFRVDRRRKMPVTILLKAIGLNPEQILANFFVFDNFRLMDSGAQMEFVADRLRGEIARFDLTDKAGAVIVEKDKRITARHTRALEASGTSFISVPEDFLVGRVLAKNMVDADTGEIIAKANDELTDSLLKKLRTAGIKDIQCLYTNELDMGAYISQTLASDETADELAARVAIYRMMRPGEPPTEDAVQALFNRLFYSEDTYDLSRVGRMKFNARVGRDTAEGRMVLANDDILDVVKILVELRNGRGEVDDIDHLGNRRVRCVGELAENQYRSGLARIEKAVKERLGQAETEALMPHDLINSKPISAALKEFFGASQLSQFMDQTNPLSEITHKRRVSALGPGGLTRERAGFEVRDVHPTHYGRVCPIETPEGPNIGLINSLALYAQLNEYGFLETPYRRVIDSKVTDQIDYLSAIEEGKYVIAQANAGLDKDGKLIDELVSARESGESVLTSPERIQYMDVAPTQIVSVAASLVPFLEHDDANRALMGANMQRQAVPVLRPEKAFVGTGVERVSAVDSGTVVTAKRGGVVDYIDTNRIVIRVNDAETVAGEVGVDIYNLIKYQRSNQNTNIHQRPIVQRGDQVGAGDVIADGASTDIGELALGQNMLVAFMPWNGYNFEDSILISERVVADDRYTSIHIEELVVMARDTKLGSEEITRDIPNLSEQQLGRLDESGIVYIGAEVNPGDVLVGKVTPKGETTLTPEEKLLRAIFGEKASDVKDTSLRVDQGTNGTVIDVQVFTREGIQRDKRAQQIIDDELKRFRLDLNDQLRIVEADAFDRIEKLLAGKTANGGPNKLAKGTPIDKAYLASVDKYHWFDIRPADDDIANQLESIKNSLEQTRHSFDLAFEEKRKKLTQGDELPAGVLKMVKVYLAVKRRLQPGDKMAGRHGNKGVVSKIVPVEDMPYMADGTPCDIVLNPLGVPSRMNVGQVLEVHLGWAAKGIGQRIGDLLQQEAKIADVRKFLDELYNKSGGKSEGLNGLSDAEITEMATNLAQGVPFATPVFDGATEEEIRAMMHLAYPDEIAAAKGLNATRTQATLHDGRTGDAFERPVTVGYMHVLKLHHLVDDKMHARSTGPYSLVTQQPLGGKAQFGGQRFGEMEVWALEAYGASYVLQEMLTVKSDDVNGRTKVYESIVKGEHAIEAGMPESFNVLVKEIRSLGIDIELERN.

This sequence belongs to the RNA polymerase beta chain family. The RNAP catalytic core consists of 2 alpha, 1 beta, 1 beta' and 1 omega subunit. When a sigma factor is associated with the core the holoenzyme is formed, which can initiate transcription.

The enzyme catalyses RNA(n) + a ribonucleoside 5'-triphosphate = RNA(n+1) + diphosphate. In terms of biological role, DNA-dependent RNA polymerase catalyzes the transcription of DNA into RNA using the four ribonucleoside triphosphates as substrates. This is DNA-directed RNA polymerase subunit beta from Methylibium petroleiphilum (strain ATCC BAA-1232 / LMG 22953 / PM1).